The following is a 296-amino-acid chain: D-alanine--D-alanine ligase (296 aa).

The ATP-grasp domain occupies 103–293; that stretch reads KEILMHYRMP…FDSFVKRIIE (191 aa). 129–180 is a binding site for ATP; sequence ISFPVAVKPSSGGSSIATFKVKSIQELKHAYEEASKYGEVMIEQWVTGKEIT. Mg(2+) contacts are provided by Asp247, Glu260, and Asn262.

The protein belongs to the D-alanine--D-alanine ligase family. The cofactor is Mg(2+). Mn(2+) serves as cofactor.

The protein resides in the cytoplasm. The catalysed reaction is 2 D-alanine + ATP = D-alanyl-D-alanine + ADP + phosphate + H(+). The protein operates within cell wall biogenesis; peptidoglycan biosynthesis. Its function is as follows. Cell wall formation. This chain is D-alanine--D-alanine ligase, found in Francisella tularensis subsp. tularensis (strain WY96-3418).